A 402-amino-acid chain; its full sequence is Tyrosine--tRNA ligase (402 aa).

The short motif at 47–56 (PTAPDLHLGH) is the 'HIGH' region element. Positions 232-236 (KMSKS) match the 'KMSKS' region motif. Lys235 provides a ligand contact to ATP. The S4 RNA-binding domain occupies 341-401 (VGVLDVLKQI…GKKRFMKLNI (61 aa)).

The protein belongs to the class-I aminoacyl-tRNA synthetase family. TyrS type 2 subfamily. In terms of assembly, homodimer.

Its subcellular location is the cytoplasm. The enzyme catalyses tRNA(Tyr) + L-tyrosine + ATP = L-tyrosyl-tRNA(Tyr) + AMP + diphosphate + H(+). Its function is as follows. Catalyzes the attachment of tyrosine to tRNA(Tyr) in a two-step reaction: tyrosine is first activated by ATP to form Tyr-AMP and then transferred to the acceptor end of tRNA(Tyr). This chain is Tyrosine--tRNA ligase, found in Helicobacter pylori (strain J99 / ATCC 700824) (Campylobacter pylori J99).